Here is a 488-residue protein sequence, read N- to C-terminus: NADH-quinone oxidoreductase subunit N 2 (488 aa).

14 helical membrane-spanning segments follow: residues 18-38, 45-65, 81-101, 110-130, 135-155, 169-189, 210-230, 242-262, 274-294, 308-328, 331-351, 375-395, 412-434, and 458-478; these read FLPE…ELFI, LVLN…LLIP, PLAV…LPFA, SFYG…FVLA, LIIL…LTAL, YLIL…FMYI, LVLG…AVPF, PTPV…IPLV, LVWT…GNLV, SSIA…VIGM, VIYF…VLAL, IAFA…TVGF, WLAF…LVVV, and FALT…WFLI.

The protein belongs to the complex I subunit 2 family. As to quaternary structure, NDH-1 is composed of 14 different subunits. Subunits NuoA, H, J, K, L, M, N constitute the membrane sector of the complex.

The protein resides in the cell inner membrane. It carries out the reaction a quinone + NADH + 5 H(+)(in) = a quinol + NAD(+) + 4 H(+)(out). Its function is as follows. NDH-1 shuttles electrons from NADH, via FMN and iron-sulfur (Fe-S) centers, to quinones in the respiratory chain. The immediate electron acceptor for the enzyme in this species is believed to be ubiquinone. Couples the redox reaction to proton translocation (for every two electrons transferred, four hydrogen ions are translocated across the cytoplasmic membrane), and thus conserves the redox energy in a proton gradient. This Aquifex aeolicus (strain VF5) protein is NADH-quinone oxidoreductase subunit N 2.